A 208-amino-acid polypeptide reads, in one-letter code: Thymidylate kinase (208 aa).

10 to 17 (GLEGAGKS) is an ATP binding site.

Belongs to the thymidylate kinase family.

It catalyses the reaction dTMP + ATP = dTDP + ADP. Functionally, phosphorylation of dTMP to form dTDP in both de novo and salvage pathways of dTTP synthesis. This chain is Thymidylate kinase, found in Pseudoalteromonas translucida (strain TAC 125).